The primary structure comprises 924 residues: DNA repair and recombination protein RDH54 (924 aa).

Basic and acidic residues predominate over residues 1–10; it reads MQIPKYENKP. Disordered regions lie at residues 1–21 and 155–183; these read MQIP…GSNK and EALS…NDGG. Residues 168-178 are compositionally biased toward low complexity; that stretch reads TTSTTETVPST. The Helicase ATP-binding domain occupies 299–487; the sequence is LENDSDISGC…FTIIDFINPG (189 aa). Residue 346–353 participates in ATP binding; that stretch reads IPLTGLCK. Positions 472–475 match the DEGH box motif; it reads NDLN. A Glycyl lysine isopeptide (Lys-Gly) (interchain with G-Cter in ubiquitin) cross-link involves residue K615. One can recognise a Helicase C-terminal domain in the interval 631 to 790; that stretch reads KLRVLMTLLE…DSEMRNKESS (160 aa).

This sequence belongs to the SNF2/RAD54 helicase family. In terms of assembly, interacts with RAD51 and DMC1.

The protein resides in the nucleus. The enzyme catalyses ATP + H2O = ADP + phosphate + H(+). Functionally, involved in the recombinational repair of double-strand breaks (DSB) in DNA during mitosis and meiosis. Has DNA dependent ATPase activity. Promotes D-loop (displacement loop) formation with RAD51 recombinase. Modifies the topology of double-stranded DNA during the D-loop reaction to facilitate the invasion of the homologous duplex molecule by the initiating single-stranded DNA substrate. Required for adaptation from G2/M checkpoint arrest induced by a double strand break, by participating in monitoring the extent of single-stranded DNA produced by resection of DNA ends. This role is distinct from its roles in recombination. Promotes colocalization of RAD51 and DMC1 during meiotic recombination. Involved in crossover interference. The polypeptide is DNA repair and recombination protein RDH54 (RDH54) (Saccharomyces cerevisiae (strain YJM789) (Baker's yeast)).